Reading from the N-terminus, the 102-residue chain is Small ribosomal subunit protein bS6 (102 aa).

It belongs to the bacterial ribosomal protein bS6 family.

Its function is as follows. Binds together with bS18 to 16S ribosomal RNA. This Deinococcus radiodurans (strain ATCC 13939 / DSM 20539 / JCM 16871 / CCUG 27074 / LMG 4051 / NBRC 15346 / NCIMB 9279 / VKM B-1422 / R1) protein is Small ribosomal subunit protein bS6 (rpsF).